Reading from the N-terminus, the 113-residue chain is Large ribosomal subunit protein bL19m (113 aa).

It belongs to the bacterial ribosomal protein bL19 family.

It is found in the mitochondrion. The protein is Large ribosomal subunit protein bL19m (RPL19) of Reclinomonas americana.